Consider the following 126-residue polypeptide: Large ribosomal subunit protein bL12 (126 aa).

This sequence belongs to the bacterial ribosomal protein bL12 family. As to quaternary structure, homodimer. Part of the ribosomal stalk of the 50S ribosomal subunit. Forms a multimeric L10(L12)X complex, where L10 forms an elongated spine to which 2 to 4 L12 dimers bind in a sequential fashion. Binds GTP-bound translation factors.

Functionally, forms part of the ribosomal stalk which helps the ribosome interact with GTP-bound translation factors. Is thus essential for accurate translation. The chain is Large ribosomal subunit protein bL12 from Methylorubrum populi (strain ATCC BAA-705 / NCIMB 13946 / BJ001) (Methylobacterium populi).